The chain runs to 434 residues: Glutamine synthetase leaf isozyme, chloroplastic (434 aa).

2 disordered regions span residues 1–33 (MQVR…ARQP) and 101–126 (TISK…GQAP). The N-terminal 54 residues, 1–54 (MQVRRDDDGAGGCAGDAVPGGGEGQDGVPARQPAGRVWGVSRAARATSGFKVLA), are a transit peptide targeting the chloroplast. Positions 10 to 25 (AGGCAGDAVPGGGEGQ) are enriched in gly residues. The GS beta-grasp domain maps to 81–161 (IIAEYIWVGG…VICDTYTPQG (81 aa)). Positions 168–434 (KRHMAAQIFS…LAAKKLALKV (267 aa)) constitute a GS catalytic domain.

It belongs to the glutamine synthetase family. Homooctamer.

It localises to the plastid. The protein localises to the chloroplast. It carries out the reaction L-glutamate + NH4(+) + ATP = L-glutamine + ADP + phosphate + H(+). Its function is as follows. The light-modulated chloroplast enzyme, encoded by a nuclear gene and expressed primarily in leaves, is responsible for the reassimilation of the ammonia generated by photorespiration. In Hordeum vulgare (Barley), this protein is Glutamine synthetase leaf isozyme, chloroplastic.